The chain runs to 634 residues: UPF0313 protein PG_0934 (634 aa).

In terms of domain architecture, Radical SAM core spans 302–582; that stretch reads AYEMIKHSVN…RQHMFFFWYK (281 aa). Positions 316, 320, and 323 each coordinate [4Fe-4S] cluster. The interval 607-634 is disordered; that stretch reads DRTTSSRNDRHTPPSTQPRKSKSKSRHS. The span at 625-634 shows a compositional bias: basic residues; sequence RKSKSKSRHS.

This sequence belongs to the UPF0313 family. Requires [4Fe-4S] cluster as cofactor.

In Porphyromonas gingivalis (strain ATCC BAA-308 / W83), this protein is UPF0313 protein PG_0934.